A 729-amino-acid polypeptide reads, in one-letter code: Cullin-6 (729 aa).

The Cullin neddylation domain maps to 659–720 (DRKYEIKACI…EQLYIRRSEN (62 aa)). A Glycyl lysine isopeptide (Lys-Gly) (interchain with G-Cter in NEDD8) cross-link involves residue Lys673.

This sequence belongs to the cullin family. Probably interacts with skr-3. Neddylated; which enhances the ubiquitination activity of SCF-like complex.

In terms of biological role, probable core component of cullin-based SCF-like E3 ubiquitin-protein ligase complexes which mediate the ubiquitination and subsequent proteasomal degradation of target proteins. The polypeptide is Cullin-6 (cul-6) (Caenorhabditis elegans).